A 381-amino-acid polypeptide reads, in one-letter code: Chymosin (381 aa).

A signal peptide spans 1 to 16 (MRGFVVLLAVFALSQA). A propeptide spans 17-58 (SGIVRIPLHKGKSLRRALKERGLLEDFLKNHQHAVSRKHSNS) (activation peptide). The 305-residue stretch at 74–378 (YFGKIYIGTP…DRASNLVGLA (305 aa)) folds into the Peptidase A1 domain. D92 is a catalytic residue. Residues 92-102 (DTGSSDLWVPS) form repeat 1. Disulfide bonds link C105/C110 and C265/C269. The active site involves D274. Copy 2 of the repeat occupies 274–284 (DTGTSMLVGPG). Residues C308 and C341 are joined by a disulfide bond.

The protein belongs to the peptidase A1 family. In terms of assembly, monomer.

The enzyme catalyses Broad specificity similar to that of pepsin A. Clots milk by cleavage of a single 104-Ser-Phe-|-Met-Ala-107 bond in kappa-chain of casein.. Inhibited by pepstatin. In terms of biological role, hydrolyzes a variety of proteins. This chain is Chymosin (CYM), found in Callithrix jacchus (White-tufted-ear marmoset).